The primary structure comprises 628 residues: Huntingtin-associated protein 1 (628 aa).

2 disordered regions span residues 1–62 (MRPK…TKTG) and 212–264 (YSDS…AHRC). The span at 32 to 44 (GPAPEPSAEPKPA) shows a compositional bias: pro residues. The span at 52-62 (GQKSGSRTKTG) shows a compositional bias: polar residues. An HAP1 N-terminal domain is found at 79–403 (RYVFQGPYGP…EDGKSHRQRS (325 aa)). Residues 152 to 319 (LLEEKERDLN…SEASQQMAEL (168 aa)) are sufficient for interaction with KIF5B. An interaction with TBP region spans residues 157 to 261 (ERDLNTAARI…PKPHPKAETA (105 aa)). Coiled-coil stretches lie at residues 168–301 (QSLV…EQML) and 327–367 (LEGY…MLAS). Residues 214-235 (DSDDDDDEEDEEDEEEGEEEER) show a composition bias toward acidic residues. The span at 236 to 248 (EGQRDQDQQHDHP) shows a compositional bias: basic and acidic residues. The sufficient for self-association and interaction with HD stretch occupies residues 276–444 (LLEEENDHLR…TSLRKFITDP (169 aa)). Disordered regions lie at residues 372–411 (HSES…GSVT), 451–529 (RDTH…VDET), and 562–628 (QDAH…SGAT). Composition is skewed to basic and acidic residues over residues 387–398 (SRPRDRQEDGKS) and 451–464 (RDTH…KEQR). An interaction with TBP region spans residues 473–582 (DLKPPEDFEA…KVVPKDSPTP (110 aa)). Acidic residues-rich tracts occupy residues 479–494 (DFEA…ELGA) and 504–527 (GQAE…PEVD). Phosphothreonine is present on Arg598. Positions 605–622 (QRLEEDRATHSPSAREEE) are enriched in basic and acidic residues.

In terms of assembly, self-associates. Interacts with HTT/huntingtin; enhanced by an expanded polyglutamine repeat within HTT. Isoform A interacts with DCTN1; decreased in presence of HTT with expanded polyglutamine repeat; decreased by phosphorylation of Hap1 isoform A at Thr-598. Isoform A interacts with KLC2; decreased by phosphorylation of Hap1 isoform A at Thr-598. Isoform A interacts with ITPR1 and APP. Isoform A interacts with AR; decreased by an expanded polyglutamine repeat within AR. Isoform A interacts with YWHAZ; enhanced by phosphorylation of Hap1 isoform A at Thr-598. Isoform A interacts with BDNF and SORT1; probably forming a complex involved in proBDNF trafficking, degradation and processing. Interacts with TBP, AHI1, HGS and KALRN. Interacts with KIF5A, KIF5B, KIF5C and GABRB3; indicative for an HAP1:KIF5 complex transporting a GABA(A) receptor as cargo. Interacts with ATXN3; in STBs. Interacts with NTRK2; HAP1 stabilizes association of NTRK2 with SORT1 preventing NTRK2 degradation. Interacts with CFAP263. Post-translationally, isoform A is phosphorylated on Thr-598.

The protein localises to the cytoplasm. Its subcellular location is the presynapse. It is found in the cytoskeleton. It localises to the cell projection. The protein resides in the dendritic spine. The protein localises to the dendrite. Its subcellular location is the axon. It is found in the lysosome. It localises to the endoplasmic reticulum. The protein resides in the mitochondrion. The protein localises to the nucleus. Its subcellular location is the cytoplasmic vesicle. It is found in the autophagosome. It localises to the early endosome. The protein resides in the growth cone. The protein localises to the neuron projection. Its subcellular location is the secretory vesicle. It is found in the synaptic vesicle. In terms of biological role, originally identified as neuronal protein that specifically associates with HTT/huntingtin and the binding is enhanced by an expanded polyglutamine repeat within HTT possibly affecting HAP1 interaction properties. Both HTT and HAP1 are involved in intracellular trafficking and HAP1 is proposed to link HTT to motor proteins and/or transport cargos. Seems to play a role in vesicular transport within neurons and axons such as from early endosomes to late endocytic compartments and to promote neurite outgrowth. The vesicular transport function via association with microtubule-dependent transporters can be attenuated by association with mutant HTT. Involved in the axonal transport of BDNF and its activity-dependent secretion; the function seems to involve HTT, DCTN1 and a complex with SORT1. Involved in APP trafficking and seems to facilitate APP anterograde transport and membrane insertion thereby possibly reducing processing into amyloid beta. Involved in delivery of gamma-aminobutyric acid (GABA(A)) receptors to synapses; the function is dependent on kinesin motor protein KIF5 and is disrupted by HTT with expanded polyglutamine repeat. Involved in regulation of autophagosome motility by promoting efficient retrograde axonal transport. Seems to be involved in regulation of membrane receptor recycling and degradation, and respective signal transduction, including GABA(A) receptors, tyrosine kinase receptors, EGFR, IP3 receptor and androgen receptor. Among others suggested to be involved in control of feeding behavior (involving hypothalamic GABA(A) receptors), cerebellar and brainstem development (involving AHI1 and NTRK1/TrkA), postnatal neurogenesis (involving hypothalamic NTRK2/TrkB regulating the number of Npyr1-expressing cells), and ITPR1/InsP3R1-mediated Ca(2+) release (involving HTT and possibly the effect of mutant HTT). Via association with DCTN1/dynactin p150-glued and HTT/huntingtin involved in cytoplasmic retention of REST in neurons. May be involved in ciliogenesiss; however, reports are conflicting: PubMed:21985783 reports that Hap1 is required for ciliogenesis in primary cortical neurons and proposes that HTT interacts with PCM1 through HAP1; PubMed:23532844 reports that mice with disrupted Hap1 display normal cilium formation and function. Involved in regulation of exocytosis. Isoform A but not isoform B seems to be involved in formation of cytoplasmic inclusion bodies (STBs). In case of anomalous expression of TBP, can sequester a subset of TBP into STBs; sequestration is enhanced by an expanded polyglutamine repeat within TBP. This Mus musculus (Mouse) protein is Huntingtin-associated protein 1 (Hap1).